The chain runs to 59 residues: Large ribosomal subunit protein uL30 (59 aa).

The protein belongs to the universal ribosomal protein uL30 family. Part of the 50S ribosomal subunit.

In Rhodococcus jostii (strain RHA1), this protein is Large ribosomal subunit protein uL30.